The primary structure comprises 103 residues: Large ribosomal subunit protein bL21 (103 aa).

Belongs to the bacterial ribosomal protein bL21 family. Part of the 50S ribosomal subunit. Contacts protein L20.

In terms of biological role, this protein binds to 23S rRNA in the presence of protein L20. The sequence is that of Large ribosomal subunit protein bL21 from Pectobacterium carotovorum subsp. carotovorum (strain PC1).